A 72-amino-acid polypeptide reads, in one-letter code: MSKEDMIEFSGTVAELLPNAMFRVKLDNDHIILAHTSGKMRKNRIRVLAGDRVNVEMTPYDLTKGRITFRFK.

Residues 1 to 72 enclose the S1-like domain; that stretch reads MSKEDMIEFS…TKGRITFRFK (72 aa).

It belongs to the IF-1 family. As to quaternary structure, component of the 30S ribosomal translation pre-initiation complex which assembles on the 30S ribosome in the order IF-2 and IF-3, IF-1 and N-formylmethionyl-tRNA(fMet); mRNA recruitment can occur at any time during PIC assembly.

It localises to the cytoplasm. Its function is as follows. One of the essential components for the initiation of protein synthesis. Stabilizes the binding of IF-2 and IF-3 on the 30S subunit to which N-formylmethionyl-tRNA(fMet) subsequently binds. Helps modulate mRNA selection, yielding the 30S pre-initiation complex (PIC). Upon addition of the 50S ribosomal subunit IF-1, IF-2 and IF-3 are released leaving the mature 70S translation initiation complex. The polypeptide is Translation initiation factor IF-1 (Acidiphilium cryptum (strain JF-5)).